Here is a 219-residue protein sequence, read N- to C-terminus: MTRKIFESDLEELHSELLRMGSMAEKQIYDCMEALEKQDENMAEVIIKKDDIIDDMQKEIENKVIRLIAMQQPIVAEDLRNIFTTVKIVTDLERLGDHAVDIAKAIKRLNGEKHHDIVKEIWNMGNKVKSMIKDSLDAYVERNLDKAYEVCKRDDDVDSLYKRIFNELLNIMSEDKSKVNQLTQFLFVCKYLERIGDRTTNVCESTIYLITGKQVDLND.

It belongs to the PhoU family. As to quaternary structure, homodimer.

It localises to the cytoplasm. Its function is as follows. Plays a role in the regulation of phosphate uptake. Encoded together with proteins of the phosphate-specific transport (Pst) system in the polycistronic pstSCAB-phoU operon. The sequence is that of Phosphate-specific transport system accessory protein PhoU homolog from Clostridium acetobutylicum (strain ATCC 824 / DSM 792 / JCM 1419 / IAM 19013 / LMG 5710 / NBRC 13948 / NRRL B-527 / VKM B-1787 / 2291 / W).